The following is a 71-amino-acid chain: Peptide Ctri10261 (71 aa).

Positions 1–23 (MKIPLILVTIAIILLMVPTESDA) are cleaved as a signal peptide. Phenylalanine amide is present on Phe-37. The propeptide occupies 41 to 71 (SLKNRDYFDYMQDPSLSNADLRELEELLEDY).

The protein belongs to the non-disulfide-bridged peptide (NDBP) superfamily. Short antimicrobial peptide (group 4) family. Expressed by the venom gland.

The protein localises to the secreted. In terms of biological role, antimicrobial peptide. This is Peptide Ctri10261 from Chaerilus tricostatus (Scorpion).